The following is a 206-amino-acid chain: Small ribosomal subunit protein uS7 (206 aa).

Over residues M1–P19 the composition is skewed to acidic residues. Positions M1–K25 are disordered. N-acetylserine is present on S2.

Belongs to the universal ribosomal protein uS7 family. In terms of assembly, part of the 30S ribosomal subunit.

In terms of biological role, one of the primary rRNA binding proteins, it binds directly to 16S rRNA where it nucleates assembly of the head domain of the 30S subunit. Is located at the subunit interface close to the decoding center. In Haloarcula marismortui (strain ATCC 43049 / DSM 3752 / JCM 8966 / VKM B-1809) (Halobacterium marismortui), this protein is Small ribosomal subunit protein uS7.